The chain runs to 154 residues: NADPH-dependent 7-cyano-7-deazaguanine reductase (154 aa).

The tract at residues 1-24 (MPKTDVSGLSQLGTKVDLPQSPEE) is disordered. The active-site Thioimide intermediate is the Cys52. Residue Asp59 is the Proton donor of the active site. Substrate-binding positions include 74–76 (VES) and 93–94 (HE).

It belongs to the GTP cyclohydrolase I family. QueF type 1 subfamily.

The protein resides in the cytoplasm. The enzyme catalyses 7-aminomethyl-7-carbaguanine + 2 NADP(+) = 7-cyano-7-deazaguanine + 2 NADPH + 3 H(+). Its pathway is tRNA modification; tRNA-queuosine biosynthesis. Catalyzes the NADPH-dependent reduction of 7-cyano-7-deazaguanine (preQ0) to 7-aminomethyl-7-deazaguanine (preQ1). The protein is NADPH-dependent 7-cyano-7-deazaguanine reductase of Sinorhizobium fredii (strain NBRC 101917 / NGR234).